We begin with the raw amino-acid sequence, 434 residues long: Protein trichome birefringence-like 3 (434 aa).

The chain crosses the membrane as a helical; Signal-anchor for type II membrane protein span at residues 15–35; that stretch reads IPLSIIVLVLCGFMFFILLYT. Residues 166-168 carry the GDS motif motif; it reads GDS. The DCXHWCLPGXXDXWN motif signature appears at 413-427; sequence DCIHWCLPGLPDTWN.

The protein belongs to the PC-esterase family. TBL subfamily.

Its subcellular location is the golgi apparatus membrane. Its function is as follows. Involved in secondary cell wall cellulose deposition. Required for normal stem development. May act as a bridging protein that binds pectin and other cell wall polysaccharides. Probably involved in maintaining esterification of pectins. May be involved in the specific O-acetylation of cell wall polymers. The sequence is that of Protein trichome birefringence-like 3 (TBL3) from Arabidopsis thaliana (Mouse-ear cress).